A 189-amino-acid polypeptide reads, in one-letter code: Probable RNA 2'-phosphotransferase (189 aa).

The protein belongs to the KptA/TPT1 family.

Its function is as follows. Removes the 2'-phosphate from RNA via an intermediate in which the phosphate is ADP-ribosylated by NAD followed by a presumed transesterification to release the RNA and generate ADP-ribose 1''-2''-cyclic phosphate (APPR&gt;P). May function as an ADP-ribosylase. This Streptomyces griseus subsp. griseus (strain JCM 4626 / CBS 651.72 / NBRC 13350 / KCC S-0626 / ISP 5235) protein is Probable RNA 2'-phosphotransferase.